The following is a 228-amino-acid chain: FAS1 domain-containing protein NCU02579 (228 aa).

The N-terminal stretch at 1 to 18 (MRFTPYLVLAPTAAVAFA) is a signal peptide. Residues 50–74 (PAVGLGPAMPPSGAPQADGPANAGG) form a disordered region. The region spanning 77–225 (SVMLSDVMGR…GEVWILKGVR (149 aa)) is the FAS1 domain.

It localises to the vacuole. The protein is FAS1 domain-containing protein NCU02579 of Neurospora crassa (strain ATCC 24698 / 74-OR23-1A / CBS 708.71 / DSM 1257 / FGSC 987).